The sequence spans 534 residues: Pentatricopeptide repeat-containing protein At5g59600 (534 aa).

PPR repeat units lie at residues 50–80 (LTRIAAKLVTFYVECGKVLDARKVFDEMPKR), 81–115 (DISGCVVMIGACARNGYYQESLDFFREMYKDGLKL), 116–150 (DAFIVPSLLKASRNLLDREFGKMIHCLVLKFSYES), 151–181 (DAFIVSSLIDMYSKFGEVGNARKVFSDLGEQ), 182–216 (DLVVFNAMISGYANNSQADEALNLVKDMKLLGIKP), 217–251 (DVITWNALISGFSHMRNEEKVSEILELMCLDGYKP), 252–286 (DVVSWTSIISGLVHNFQNEKAFDAFKQMLTHGLYP), 287–321 (NSATIITLLPACTTLAYMKHGKEIHGYSVVTGLED), 322–352 (HGFVRSALLDMYGKCGFISEAMILFRKTPKK), 353–387 (TTVTFNSMIFCYANHGLADKAVELFDQMEATGEKL), 388–418 (DHLTFTAILTACSHAGLTDLGQNLFLLMQNK), and 424–454 (RLEHYACMVDLLGRAGKLVEAYEMIKAMRME). The interval 459-534 (VWGALLAACR…FLGSSWVETV (76 aa)) is type E motif.

It belongs to the PPR family. PCMP-E subfamily.

The protein is Pentatricopeptide repeat-containing protein At5g59600 (PCMP-E1) of Arabidopsis thaliana (Mouse-ear cress).